Reading from the N-terminus, the 2193-residue chain is Genome polyprotein (2193 aa).

The disordered stretch occupies residues 1-22; the sequence is MGSQVSTQRSGSHENSNSASEG. Glycine 2 carries the N-myristoyl glycine; by host lipid modification. The Cytoplasmic portion of the chain corresponds to 2–1503; sequence GSQVSTQRSG…HLNRAVLIMQ (1502 aa). Amphipathic alpha-helix regions lie at residues 566-588 and 568-588; these read GDGI…LTSL and GIAD…LTSL. Active-site for protease 2A activity residues include histidine 883 and aspartate 901. Zn(2+)-binding residues include cysteine 918 and cysteine 920. Residue cysteine 972 is the For protease 2A activity of the active site. Residues cysteine 978 and histidine 980 each contribute to the Zn(2+) site. The membrane-binding stretch occupies residues 1112-1184; it reads SASWLKKFND…EQSAASQEDL (73 aa). The segment at 1112–1250 is oligomerization; it reads SASWLKKFND…SPGTGKSLAT (139 aa). The RNA-binding stretch occupies residues 1133–1137; sequence SNKIS. Residues 1216–1374 enclose the SF3 helicase domain; that stretch reads EKRMNNYMQF…YKTDLGRLDA (159 aa). 1240 to 1247 serves as a coordination point for ATP; it reads GSPGTGKS. Zn(2+) is bound by residues cysteine 1381, cysteine 1392, and cysteine 1397. The segment at 1381 to 1397 adopts a C4-type; degenerate zinc-finger fold; it reads CSENNTANFKRCSPLVC. The interval 1424-1431 is RNA-binding; that stretch reads EYNNRYAI. The interval 1435–1440 is oligomerization; it reads IEALFQ. Residues 1504–1519 lie within the membrane without spanning it; the sequence is SIATVVAVVSLVYVIY. The Cytoplasmic segment spans residues 1520–2193; that stretch reads KLFAGFQGAY…NLRRNWLELF (674 aa). Tyrosine 1529 is modified (O-(5'-phospho-RNA)-tyrosine). One can recognise a Peptidase C3 domain in the interval 1549-1727; the sequence is GPSLDFALSL…FCAGLKRSYF (179 aa). Active-site for protease 3C activity residues include histidine 1588, glutamate 1619, and cysteine 1695. The region spanning 1958–2073 is the RdRp catalytic domain; it reads GSLFAFDYSG…ASYPFPIDCL (116 aa). Residues aspartate 1964 and aspartate 2060 each coordinate Mg(2+).

Belongs to the picornaviruses polyprotein family. In terms of assembly, interacts with capsid protein VP1 and capsid protein VP3 to form heterotrimeric protomers. As to quaternary structure, interacts with capsid protein VP0, and capsid protein VP3 to form heterotrimeric protomers. Five protomers subsequently associate to form pentamers which serve as building blocks for the capsid. Interacts with capsid protein VP2, capsid protein VP3 and capsid protein VP4 following cleavage of capsid protein VP0. Interacts with capsid protein VP1 and capsid protein VP3 in the mature capsid. In terms of assembly, interacts with capsid protein VP0 and capsid protein VP1 to form heterotrimeric protomers. Five protomers subsequently associate to form pentamers which serve as building blocks for the capsid. Interacts with capsid protein VP4 in the mature capsid. Interacts with protein 2C; this interaction may be important for virion morphogenesis. As to quaternary structure, interacts with capsid protein VP1 and capsid protein VP3. Homodimer. In terms of assembly, homohexamer; forms a hexameric ring structure with 6-fold symmetry characteristic of AAA+ ATPases. Interacts (via N-terminus) with host RTN3 (via reticulon domain); this interaction is important for viral replication. Interacts with capsid protein VP3; this interaction may be important for virion morphogenesis. As to quaternary structure, interacts with protein 3CD. Homodimer. Interacts with host GBF1. Interacts (via GOLD domain) with host ACBD3 (via GOLD domain); this interaction allows the formation of a viral protein 3A/ACBD3 heterotetramer with a 2:2 stoichiometry, which will stimulate the recruitment of host PI4KB in order to synthesize PI4P at the viral RNA replication sites. In terms of assembly, interacts with RNA-directed RNA polymerase. As to quaternary structure, interacts with host IFIH1/MDA5; this interaction inhibits host IFIH1. Interacts with protein 3AB and with RNA-directed RNA polymerase. In terms of assembly, interacts with Viral protein genome-linked and with protein 3CD. Requires Mg(2+) as cofactor. Post-translationally, specific enzymatic cleavages in vivo by the viral proteases yield processing intermediates and the mature proteins. In terms of processing, myristoylation is required for the formation of pentamers during virus assembly. Further assembly of 12 pentamers and a molecule of genomic RNA generates the provirion. During virion maturation, immature virions are rendered infectious following cleavage of VP0 into VP4 and VP2. This maturation seems to be an autocatalytic event triggered by the presence of RNA in the capsid and it is followed by a conformational change infectious virion. Post-translationally, myristoylation is required during RNA encapsidation and formation of the mature virus particle. In terms of processing, VPg is uridylylated by the polymerase into VPg-pUpU. This acts as a nucleotide-peptide primer for the genomic RNA replication.

It localises to the virion. It is found in the host cytoplasm. The protein localises to the host cytoplasmic vesicle membrane. Its subcellular location is the host nucleus. The enzyme catalyses a ribonucleoside 5'-triphosphate + H2O = a ribonucleoside 5'-diphosphate + phosphate + H(+). The catalysed reaction is Selective cleavage of Tyr-|-Gly bond in the picornavirus polyprotein.. It carries out the reaction RNA(n) + a ribonucleoside 5'-triphosphate = RNA(n+1) + diphosphate. It catalyses the reaction Selective cleavage of Gln-|-Gly bond in the poliovirus polyprotein. In other picornavirus reactions Glu may be substituted for Gln, and Ser or Thr for Gly.. Its activity is regulated as follows. Replication or transcription is subject to high level of random mutations by the nucleotide analog ribavirin. Functionally, forms an icosahedral capsid of pseudo T=3 symmetry with capsid proteins VP2 and VP3. The capsid is 300 Angstroms in diameter, composed of 60 copies of each capsid protein and enclosing the viral positive strand RNA genome. Capsid protein VP1 mainly forms the vertices of the capsid. Capsid protein VP1 interacts with host cell receptor to provide virion attachment to target host cells. This attachment induces virion internalization. After binding to its receptor, the capsid undergoes conformational changes. Capsid protein VP1 N-terminus (that contains an amphipathic alpha-helix) and capsid protein VP4 are externalized. Together, they shape a pore in the host membrane through which viral genome is translocated to host cell cytoplasm. In terms of biological role, forms an icosahedral capsid of pseudo T=3 symmetry with capsid proteins VP2 and VP3. The capsid is 300 Angstroms in diameter, composed of 60 copies of each capsid protein and enclosing the viral positive strand RNA genome. Its function is as follows. Lies on the inner surface of the capsid shell. After binding to the host receptor, the capsid undergoes conformational changes. Capsid protein VP4 is released, Capsid protein VP1 N-terminus is externalized, and together, they shape a pore in the host membrane through which the viral genome is translocated into the host cell cytoplasm. Component of immature procapsids, which is cleaved into capsid proteins VP4 and VP2 after maturation. Allows the capsid to remain inactive before the maturation step. Functionally, cysteine protease that cleaves viral polyprotein and specific host proteins. It is responsible for the autocatalytic cleavage between the P1 and P2 regions, which is the first cleavage occurring in the polyprotein. Also cleaves the host translation initiation factor EIF4G1, in order to shut down the capped cellular mRNA translation. Inhibits the host nucleus-cytoplasm protein and RNA trafficking by cleaving host members of the nuclear pores. Counteracts stress granule formation probably by antagonizing its assembly or promoting its dissassembly. Cleaves and inhibits host IFIH1/MDA5, thereby inhibiting the type-I IFN production and the establishment of the antiviral state. Cleaves and inhibits host MAVS, thereby inhibiting the type-I IFN production and the establishment of the antiviral state. In terms of biological role, plays an essential role in the virus replication cycle by acting as a viroporin. Creates a pore in the host endoplasmic reticulum and as a consequence releases Ca2+ in the cytoplasm of infected cell. In turn, high levels of cytoplasmic calcium may trigger membrane trafficking and transport of viral ER-associated proteins to viroplasms, sites of viral genome replication. Its function is as follows. Induces and associates with structural rearrangements of intracellular membranes. Displays RNA-binding, nucleotide binding and NTPase activities. May play a role in virion morphogenesis and viral RNA encapsidation by interacting with the capsid protein VP3. Localizes the viral replication complex to the surface of membranous vesicles. Together with protein 3CD binds the Cis-Active RNA Element (CRE) which is involved in RNA synthesis initiation. Acts as a cofactor to stimulate the activity of 3D polymerase, maybe through a nucleid acid chaperone activity. Functionally, localizes the viral replication complex to the surface of membranous vesicles. It inhibits host cell endoplasmic reticulum-to-Golgi apparatus transport and causes the disassembly of the Golgi complex, possibly through GBF1 interaction. This would result in depletion of MHC, trail receptors and IFN receptors at the host cell surface. Plays an essential role in viral RNA replication by recruiting ACBD3 and PI4KB at the viral replication sites, thereby allowing the formation of the rearranged membranous structures where viral replication takes place. In terms of biological role, acts as a primer for viral RNA replication and remains covalently bound to viral genomic RNA. VPg is uridylylated prior to priming replication into VPg-pUpU. The oriI viral genomic sequence may act as a template for this. The VPg-pUpU is then used as primer on the genomic RNA poly(A) by the RNA-dependent RNA polymerase to replicate the viral genome. During genome replication, the VPg-RNA linkage is removed by the host TDP2, thereby accelerating replication. During the late stage of the replication cycle, host TDP2 is excluded from sites of viral RNA synthesis and encapsidation, allowing for the generation of progeny virions. Its function is as follows. Involved in the viral replication complex and viral polypeptide maturation. It exhibits protease activity with a specificity and catalytic efficiency that is different from protease 3C. Protein 3CD lacks polymerase activity. Protein 3CD binds to the 5'UTR of the viral genome. Major viral protease that mediates proteolytic processing of the polyprotein. Cleaves host EIF5B, contributing to host translation shutoff. Also cleaves host PABPC1, contributing to host translation shutoff. Binds and inhibits host IFIH1/MDA5, thereby inhibiting the type-I IFN production and the establishment of the antiviral state. Cleaves host MAP3K7/TAK1, resulting in inhibition of TRAF6-triggered NF-kappa-B induction. Cleaves host NLRP1, triggers host N-glycine-mediated degradation of the autoinhibitory NLRP1 N-terminal fragment. Functionally, replicates the viral genomic RNA on the surface of intracellular membranes. May form linear arrays of subunits that propagate along a strong head-to-tail interaction called interface-I. Covalently attaches UMP to a tyrosine of VPg, which is used to prime RNA synthesis. The positive stranded RNA genome is first replicated at virus induced membranous vesicles, creating a dsRNA genomic replication form. This dsRNA is then used as template to synthesize positive stranded RNA genomes. ss(+)RNA genomes are either translated, replicated or encapsidated. This chain is Genome polyprotein, found in Homo sapiens (Human).